The primary structure comprises 338 residues: Glycerol-3-phosphate dehydrogenase [NAD(P)+] (338 aa).

Residues Ser13, Trp14, and Lys108 each contribute to the NADPH site. Sn-glycerol 3-phosphate contacts are provided by Lys108, Gly139, and Ser141. Ala143 provides a ligand contact to NADPH. Sn-glycerol 3-phosphate contacts are provided by Lys194, Asp247, Ser257, Arg258, and Asn259. Lys194 serves as the catalytic Proton acceptor. Arg258 serves as a coordination point for NADPH. Residues Val282 and Glu284 each contribute to the NADPH site.

It belongs to the NAD-dependent glycerol-3-phosphate dehydrogenase family.

The protein localises to the cytoplasm. It carries out the reaction sn-glycerol 3-phosphate + NAD(+) = dihydroxyacetone phosphate + NADH + H(+). It catalyses the reaction sn-glycerol 3-phosphate + NADP(+) = dihydroxyacetone phosphate + NADPH + H(+). It participates in membrane lipid metabolism; glycerophospholipid metabolism. In terms of biological role, catalyzes the reduction of the glycolytic intermediate dihydroxyacetone phosphate (DHAP) to sn-glycerol 3-phosphate (G3P), the key precursor for phospholipid synthesis. The polypeptide is Glycerol-3-phosphate dehydrogenase [NAD(P)+] (Listeria monocytogenes serotype 4b (strain CLIP80459)).